An 854-amino-acid chain; its full sequence is Espin (854 aa).

ANK repeat units lie at residues 1-31 (MALEQALQAARQGELDVLRSLHAAGLLGPSL), 35-64 (LDALPVHHAARAGKLHCLRFLVEEAALPAA), 69-99 (NGATPAHDASATGHLACLQWLLSQGGCRVQD), 103-133 (SGATVLHLAARFGHPEVVNWLLHHGGGDPTA), 137-167 (MGALPIHYAAAKGDFPSLRLLVEHYPEGVNA), 171-201 (NGATPLYLACQEGHLEVTQYLVQECGADPHA), 205-235 (DGMTPLHAAAQMGHSPVIVWLVSCTDVSLSE), 239-268 (DGATAMHFAASRGHTKVLSWLLLHGGEISA), and 271-300 (WGGTPLHDAAENGELECCQILVVNGAELDV). Phosphoserine is present on residues Ser338 and Ser342. The segment covering 338-349 (SRDPSAELEAKQ) has biased composition (basic and acidic residues). Disordered regions lie at residues 338-400 (SRDP…CGLS), 415-474 (NPEL…MQTK), 487-713 (KELS…AGFQ), 765-788 (KMQEEEEQRRKEEEEEARLASMPA), and 800-832 (EEREQKRKEEERQKQEELRREKEQSEKLRTLGY). Positions 352–377 (SGMSSPNTTVSVQPLNFDLSSPTSTL) are enriched in polar residues. The span at 378–389 (SNYDSCSSSHSS) shows a compositional bias: low complexity. A compositionally biased stretch (pro residues) spans 428-463 (PTPPPPPPSFPPPPPPPGTQLPPPPPGYPAPKPPVG). A compositionally biased stretch (basic and acidic residues) spans 487-505 (KELSSCDGHDGLRRQDSSR). Residue Ser515 is modified to Phosphoserine. Positions 595–620 (LPPPPPPPPPPLPEAASSPPPAPPLP) are enriched in pro residues. Residues 633 to 642 (SSSSTGSTKS) show a composition bias toward low complexity. Polar residues-rich tracts occupy residues 643–652 (FNMMSPTGDN) and 667–678 (PTPQSKGLTTVF). Ser647 is subject to Phosphoserine. The region spanning 651 to 668 (DNSELLAEIKAGKSLKPT) is the WH2 domain. Phosphoserine is present on residues Ser690 and Ser696. Positions 692–703 (LPSVSPALSPVR) are enriched in low complexity. Residues 756–830 (QVMVRKMQLK…KEQSEKLRTL (75 aa)) are a coiled coil.

In terms of assembly, monomer. Binds F-actin in a Ca(2+)-resistant fashion. Interacts (via N-terminus) with BAIAP2 (via SH3-domain). Interacts with PFN2. Interacts with MYO3A (via C-terminus). Interacts with MYO3B (via C-terminus).

The protein resides in the cytoplasm. It is found in the cytoskeleton. It localises to the cell projection. The protein localises to the stereocilium. Its subcellular location is the microvillus. Its function is as follows. Multifunctional actin-bundling protein. Plays a major role in regulating the organization, dimension, dynamics and signaling capacities of the actin filament-rich microvilli in the mechanosensory and chemosensory cells. Required for the assembly and stabilization of the stereociliary parallel actin bundles. Plays a crucial role in the formation and maintenance of inner ear hair cell stereocilia. Involved in the elongation of actin in stereocilia. In extrastriolar hair cells, required for targeting MYO3B to stereocilia tips, and for regulation of stereocilia diameter and staircase formation. The protein is Espin (ESPN) of Homo sapiens (Human).